Here is a 186-residue protein sequence, read N- to C-terminus: MELPRLYAITDRKKYGENFLETLEKILKKGVRMVQLREKDLKDRELYKLAKEVRALTKKYKALLLINERFDIALAVEADGVHLPEQSFPPSVVKRVNPNFIVGFSAHSLESAKYAEKEGADFITLSPIFKTSSHPEAQPIGLKTLKEVSEKVNIPVYALGGITWEKIKVCYKNGAYGIAGISMFLE.

Residues 35–39 (QLREK) and asparagine 67 contribute to the 4-amino-2-methyl-5-(diphosphooxymethyl)pyrimidine site. Mg(2+) is bound at residue glutamate 68. Serine 105 lines the 4-amino-2-methyl-5-(diphosphooxymethyl)pyrimidine pocket. 131–133 (TSS) contributes to the 2-[(2R,5Z)-2-carboxy-4-methylthiazol-5(2H)-ylidene]ethyl phosphate binding site. Histidine 134 contributes to the 4-amino-2-methyl-5-(diphosphooxymethyl)pyrimidine binding site. Residues glycine 161 and 181 to 182 (IS) contribute to the 2-[(2R,5Z)-2-carboxy-4-methylthiazol-5(2H)-ylidene]ethyl phosphate site.

It belongs to the thiamine-phosphate synthase family. Mg(2+) is required as a cofactor.

It carries out the reaction 2-[(2R,5Z)-2-carboxy-4-methylthiazol-5(2H)-ylidene]ethyl phosphate + 4-amino-2-methyl-5-(diphosphooxymethyl)pyrimidine + 2 H(+) = thiamine phosphate + CO2 + diphosphate. The enzyme catalyses 2-(2-carboxy-4-methylthiazol-5-yl)ethyl phosphate + 4-amino-2-methyl-5-(diphosphooxymethyl)pyrimidine + 2 H(+) = thiamine phosphate + CO2 + diphosphate. The catalysed reaction is 4-methyl-5-(2-phosphooxyethyl)-thiazole + 4-amino-2-methyl-5-(diphosphooxymethyl)pyrimidine + H(+) = thiamine phosphate + diphosphate. It functions in the pathway cofactor biosynthesis; thiamine diphosphate biosynthesis; thiamine phosphate from 4-amino-2-methyl-5-diphosphomethylpyrimidine and 4-methyl-5-(2-phosphoethyl)-thiazole: step 1/1. Condenses 4-methyl-5-(beta-hydroxyethyl)thiazole monophosphate (THZ-P) and 2-methyl-4-amino-5-hydroxymethyl pyrimidine pyrophosphate (HMP-PP) to form thiamine monophosphate (TMP). This chain is Putative thiamine-phosphate synthase 2 (thiE2), found in Aquifex aeolicus (strain VF5).